Reading from the N-terminus, the 334-residue chain is Ketol-acid reductoisomerase (NADP(+)) (334 aa).

Residues 1 to 181 (MTTVYYDQDV…GATRAGVIET (181 aa)) form the KARI N-terminal Rossmann domain. Residues 25 to 28 (YGSQ), R48, S52, and 82 to 85 (DEIQ) contribute to the NADP(+) site. H107 is a catalytic residue. G133 lines the NADP(+) pocket. The KARI C-terminal knotted domain occupies 182–327 (TFKEETETDL…RELREMMPFI (146 aa)). Mg(2+) is bound by residues D190, E194, E226, and E230. S251 provides a ligand contact to substrate.

This sequence belongs to the ketol-acid reductoisomerase family. It depends on Mg(2+) as a cofactor.

It catalyses the reaction (2R)-2,3-dihydroxy-3-methylbutanoate + NADP(+) = (2S)-2-acetolactate + NADPH + H(+). It carries out the reaction (2R,3R)-2,3-dihydroxy-3-methylpentanoate + NADP(+) = (S)-2-ethyl-2-hydroxy-3-oxobutanoate + NADPH + H(+). It functions in the pathway amino-acid biosynthesis; L-isoleucine biosynthesis; L-isoleucine from 2-oxobutanoate: step 2/4. Its pathway is amino-acid biosynthesis; L-valine biosynthesis; L-valine from pyruvate: step 2/4. Involved in the biosynthesis of branched-chain amino acids (BCAA). Catalyzes an alkyl-migration followed by a ketol-acid reduction of (S)-2-acetolactate (S2AL) to yield (R)-2,3-dihydroxy-isovalerate. In the isomerase reaction, S2AL is rearranged via a Mg-dependent methyl migration to produce 3-hydroxy-3-methyl-2-ketobutyrate (HMKB). In the reductase reaction, this 2-ketoacid undergoes a metal-dependent reduction by NADPH to yield (R)-2,3-dihydroxy-isovalerate. The protein is Ketol-acid reductoisomerase (NADP(+)) of Staphylococcus aureus (strain Mu3 / ATCC 700698).